Reading from the N-terminus, the 386-residue chain is Delta(7)-sterol 5(6)-desaturase ERG3 (386 aa).

Helical transmembrane passes span 120-140 (LSLFIITTIFGWLLYFIVAYL), 172-192 (IPVMVLLTIPFFLLELNGYSF), and 206-226 (AILWQIPKFILFTDCGIYFLH). The region spanning 214–337 (FILFTDCGIY…FTTLWDRLGN (124 aa)) is the Fatty acid hydroxylase domain. Positions 226–230 (HRWLH) match the Histidine box-1 motif. A Histidine box-2 motif is present at residues 239 to 243 (HKPHH). The helical transmembrane segment at 272–292 (PLLFPLHKVLYLFLFTFVNFW) threads the bilayer. Residues 314–318 (HTVHH) carry the Histidine box-3 motif.

The protein belongs to the sterol desaturase family. Requires Fe cation as cofactor.

It localises to the endoplasmic reticulum membrane. The catalysed reaction is a Delta(7)-sterol + 2 Fe(II)-[cytochrome b5] + O2 + 2 H(+) = a Delta(5),Delta(7)-sterol + 2 Fe(III)-[cytochrome b5] + 2 H2O. The protein operates within steroid metabolism; ergosterol biosynthesis; ergosterol from zymosterol: step 3/5. In terms of biological role, C-5 sterol desaturase; part of the third module of ergosterol biosynthesis pathway that includes the late steps of the pathwa. ERG3 catalyzes the introduction of a C-5 double bond in the B ring to produce 5-dehydroepisterol. The third module or late pathway involves the ergosterol synthesis itself through consecutive reactions that mainly occur in the endoplasmic reticulum (ER) membrane. Firstly, the squalene synthase ERG9 catalyzes the condensation of 2 farnesyl pyrophosphate moieties to form squalene, which is the precursor of all steroids. Squalene synthase is crucial for balancing the incorporation of farnesyl diphosphate (FPP) into sterol and nonsterol isoprene synthesis. Secondly, the squalene epoxidase ERG1 catalyzes the stereospecific oxidation of squalene to (S)-2,3-epoxysqualene, which is considered to be a rate-limiting enzyme in steroid biosynthesis. Then, the lanosterol synthase ERG7 catalyzes the cyclization of (S)-2,3 oxidosqualene to lanosterol, a reaction that forms the sterol core. In the next steps, lanosterol is transformed to zymosterol through a complex process involving various demethylation, reduction and desaturation reactions. The lanosterol 14-alpha-demethylase ERG11 (also known as CYP51) catalyzes C14-demethylation of lanosterol to produce 4,4'-dimethyl cholesta-8,14,24-triene-3-beta-ol, which is critical for ergosterol biosynthesis. The C-14 reductase ERG24 reduces the C14=C15 double bond of 4,4-dimethyl-cholesta-8,14,24-trienol to produce 4,4-dimethyl-cholesta-8,24-dienol. 4,4-dimethyl-cholesta-8,24-dienol is substrate of the C-4 demethylation complex ERG25-ERG26-ERG27 in which ERG25 catalyzes the three-step monooxygenation required for the demethylation of 4,4-dimethyl and 4alpha-methylsterols, ERG26 catalyzes the oxidative decarboxylation that results in a reduction of the 3-beta-hydroxy group at the C-3 carbon to an oxo group, and ERG27 is responsible for the reduction of the keto group on the C-3. ERG28 has a role as a scaffold to help anchor ERG25, ERG26 and ERG27 to the endoplasmic reticulum and ERG29 regulates the activity of the iron-containing C4-methylsterol oxidase ERG25. Then, the sterol 24-C-methyltransferase ERG6 catalyzes the methyl transfer from S-adenosyl-methionine to the C-24 of zymosterol to form fecosterol. The C-8 sterol isomerase ERG2 catalyzes the reaction which results in unsaturation at C-7 in the B ring of sterols and thus converts fecosterol to episterol. The sterol-C5-desaturase ERG3 then catalyzes the introduction of a C-5 double bond in the B ring to produce 5-dehydroepisterol. The C-22 sterol desaturase ERG5 further converts 5-dehydroepisterol into ergosta-5,7,22,24(28)-tetraen-3beta-ol by forming the C-22(23) double bond in the sterol side chain. Finally, ergosta-5,7,22,24(28)-tetraen-3beta-ol is substrate of the C-24(28) sterol reductase ERG4 to produce ergosterol. The protein is Delta(7)-sterol 5(6)-desaturase ERG3 of Candida albicans (strain SC5314 / ATCC MYA-2876) (Yeast).